Consider the following 475-residue polypeptide: Aspartyl/glutamyl-tRNA(Asn/Gln) amidotransferase subunit B (475 aa).

This sequence belongs to the GatB/GatE family. GatB subfamily. As to quaternary structure, heterotrimer of A, B and C subunits.

It catalyses the reaction L-glutamyl-tRNA(Gln) + L-glutamine + ATP + H2O = L-glutaminyl-tRNA(Gln) + L-glutamate + ADP + phosphate + H(+). It carries out the reaction L-aspartyl-tRNA(Asn) + L-glutamine + ATP + H2O = L-asparaginyl-tRNA(Asn) + L-glutamate + ADP + phosphate + 2 H(+). Allows the formation of correctly charged Asn-tRNA(Asn) or Gln-tRNA(Gln) through the transamidation of misacylated Asp-tRNA(Asn) or Glu-tRNA(Gln) in organisms which lack either or both of asparaginyl-tRNA or glutaminyl-tRNA synthetases. The reaction takes place in the presence of glutamine and ATP through an activated phospho-Asp-tRNA(Asn) or phospho-Glu-tRNA(Gln). The polypeptide is Aspartyl/glutamyl-tRNA(Asn/Gln) amidotransferase subunit B (Pediococcus pentosaceus (strain ATCC 25745 / CCUG 21536 / LMG 10740 / 183-1w)).